We begin with the raw amino-acid sequence, 131 residues long: uncharacterized protein (131 aa).

This is an uncharacterized protein from Homo sapiens (Human).